The following is an 88-amino-acid chain: MSDEQKTKLIELKQKVNDLEFELDKIKNEFMMKIIIAVILIFFLTIVGLFYLIINLSRIISLNQKRKSLELKTKELNHEINKIEISLL.

The chain crosses the membrane as a helical span at residues 34-54; sequence IIIAVILIFFLTIVGLFYLII.

The protein resides in the membrane. This is an uncharacterized protein from Ureaplasma parvum serovar 3 (strain ATCC 700970).